Consider the following 586-residue polypeptide: MTQTTAPHAASNYLRNIIEDDLAANRFQGKRWAGKPGPASMQASGLPDPARIRTRFPPEPNGYLHIGHAKSICVNFGIAKEFGGVCHLRFDDTNPEKEDQEYVDAIIEAVRWLGFDWNTDGNNNLYFASDYFEFMYEFAEALIEAGHAFVDEQSADDIRAQRGTLTEPGRNSPFRDRPAAESLTRLREMRDGKHPDGSLVLRARIDMASPNINLRDPVMYRVRHAAHHRTGDKWCIYPMYSWAHPVEDALEGITHSICTLEFEDQRPFYDWILARLADLGKLARPLPRQYEFSRLNMSYIVTSKRKLLQLVREGYVDGWDDPRMPTLFGLRRRGYTASAIRLFCDRTAVSKSDSRIDYSLLEQAVRDDLDPGTTRSVAVLDPLKLVITNYPKDQTEVCKAPRNPHDPEAGQREFPFSRELWIERDDFREEAPKKYFRLFPGNLVRLKYGYVVRCTGFTKDEAGNITEVQAEYLPDTKSGTPGADSVKVKGNITWVSAAHAVPAEVRLYDRLFADPHPDGGDKDFLACLNPNSIQTVQAWLEPGTRAEPGATWQFERLGYFTVDSKDSSPEAPVLNRIVTLKDSWAA.

The 'HIGH' region signature appears at 58 to 68; it reads PEPNGYLHIGH. Residues 59 to 61 and 65 to 71 each bind ATP; these read EPN and HIGHAKS. Residues Asp-91 and Tyr-240 each coordinate L-glutamine. ATP-binding positions include Thr-259 and 294–295; that span reads RL. A 'KMSKS' region motif is present at residues 301–305; it reads VTSKR.

It belongs to the class-I aminoacyl-tRNA synthetase family. As to quaternary structure, monomer.

It is found in the cytoplasm. The catalysed reaction is tRNA(Gln) + L-glutamine + ATP = L-glutaminyl-tRNA(Gln) + AMP + diphosphate. The sequence is that of Glutamine--tRNA ligase from Bordetella avium (strain 197N).